A 172-amino-acid polypeptide reads, in one-letter code: Peroxiredoxin AHP1 (172 aa).

In terms of domain architecture, Thioredoxin spans 4 to 171 (LQPGDSFPAN…VLTVLGNQGK (168 aa)). Lys44 participates in a covalent cross-link: Glycyl lysine isopeptide (Lys-Gly) (interchain with G-Cter in URM1). Cys60 functions as the Cysteine sulfenic acid (-SOH) intermediate in the catalytic mechanism. Cys60 bears the Cysteine persulfide mark. Residues Lys63, Lys99, Lys141, Lys156, and Lys171 each participate in a glycyl lysine isopeptide (Lys-Gly) (interchain with G-Cter in URM1) cross-link.

The protein belongs to the peroxiredoxin family. Prx5 subfamily. Homodimer; disulfide-linked, upon oxidation. In terms of processing, conjugated to URM1, a ubiquitin-like protein, in response to oxidative stresses. The attachment of URM1 to lysine residues exclusively depends on the presence of a peroxidatic cysteine in the target protein, with low specificity for the particular residue, motif, or structural context at which urmylation can occur. The URM1-conjugation reaction is mechanistically and directly coupled to the process of cysteine persulfidation, transfering the sulfur atom of the URM1 thiocarboxyl group to redox-active cysteine residues in the target protein if it is exposed to oxidative conditions. Post-translationally, persulfidated on specific redox-active cysteine residues. Persulfidation (also called protein S-sulfhydration) may provide a molecular mechanism that enables cells to protect vulnerable cysteine residues from reactive oxygen species (ROS) under stress conditions.

Its subcellular location is the cytoplasm. It carries out the reaction a hydroperoxide + [thioredoxin]-dithiol = an alcohol + [thioredoxin]-disulfide + H2O. Thiol-specific peroxidase that catalyzes the reduction of hydrogen peroxide and organic hydroperoxides to water and alcohols, respectively. Plays a role in cell protection against oxidative stress by detoxifying peroxides and as sensor of hydrogen peroxide-mediated signaling events. Preferentially eliminates organic peroxides rather than hydrogen peroxide. Relays alkyl hydroperoxides as a signal to the transcription factor CAD1/YAP2 by inducing the formation of intramolecular disulfide bonds in CAD1, which causes its nuclear accumulation and activation. Involved in cellular Mn(2+) homeostasis. The polypeptide is Peroxiredoxin AHP1 (AHP1) (Chaetomium thermophilum (strain DSM 1495 / CBS 144.50 / IMI 039719) (Thermochaetoides thermophila)).